The primary structure comprises 964 residues: Protein HIRA (964 aa).

WD repeat units follow at residues 10–50 (RHEG…KDNT), 64–103 (DHFG…GTSE), 123–162 (GHTA…CTAV), 165–204 (GHTS…LAHK), 259–331 (GHNA…PLFV), and 335–376 (FFSQ…HRLS). The tract at residues 453–490 (SHEDSKKTAGPTADDVKKGNQLSSPVKQREYRRPDGRK) is disordered. Over residues 479 to 490 (KQREYRRPDGRK) the composition is skewed to basic and acidic residues. A WD 7 repeat occupies 644-685 (LWSDRISGKVTVLAGNANFWAVGCEDGFLQVYTRCGVRAMPA). Positions 920 to 940 (ASNRKVQRLLNEFMDLLLEYE) form a coiled coil.

Belongs to the WD repeat HIR1 family. Interacts with RS2. More abundant in apices and young leaf primordia than in fully expanded leaf tissues.

It localises to the nucleus. Functionally, histone chaperone involved in maintining knox genes silencing throughout leaf development. This is Protein HIRA from Zea mays (Maize).